A 359-amino-acid polypeptide reads, in one-letter code: Membrane-bound lytic murein transglycosylase C (359 aa).

The first 16 residues, 1–16 (MKKYLALALIAPLLIS), serve as a signal peptide directing secretion. Residue Cys17 is the site of N-palmitoyl cysteine attachment. The S-diacylglycerol cysteine moiety is linked to residue Cys17.

This sequence belongs to the transglycosylase Slt family.

Its subcellular location is the cell outer membrane. The enzyme catalyses Exolytic cleavage of the (1-&gt;4)-beta-glycosidic linkage between N-acetylmuramic acid (MurNAc) and N-acetylglucosamine (GlcNAc) residues in peptidoglycan, from either the reducing or the non-reducing ends of the peptidoglycan chains, with concomitant formation of a 1,6-anhydrobond in the MurNAc residue.. Functionally, murein-degrading enzyme. May play a role in recycling of muropeptides during cell elongation and/or cell division. The sequence is that of Membrane-bound lytic murein transglycosylase C from Escherichia coli O81 (strain ED1a).